The primary structure comprises 185 residues: Ribosome-recycling factor (185 aa).

The protein belongs to the RRF family.

The protein localises to the cytoplasm. Functionally, responsible for the release of ribosomes from messenger RNA at the termination of protein biosynthesis. May increase the efficiency of translation by recycling ribosomes from one round of translation to another. This Streptococcus pneumoniae (strain 70585) protein is Ribosome-recycling factor.